We begin with the raw amino-acid sequence, 2799 residues long: E3 ubiquitin-protein ligase UBR5 (2799 aa).

At threonine 2 the chain carries N-acetylthreonine. Over residues 77–88 (DRLELGKPDNND) the composition is skewed to basic and acidic residues. Residues 77–175 (DRLELGKPDN…DRGSGLLGSQ (99 aa)) form a disordered region. Positions 89–110 (GSKLNSNSGAGRTSRPGRTSDS) are enriched in polar residues. At serine 110 the chain carries Phosphoserine. The segment covering 135–144 (GVGGSGGGSS) has biased composition (gly residues). The 43-residue stretch at 184-226 (VIPEELISQAQVVLQGKSRSVIIRELQRTNLDVNLAVNNLLSR) folds into the UBA domain. Serine 327 carries the post-translational modification Phosphoserine. Positions 328-347 (FDNERGSTSKEGEPNLDKKN) are enriched in basic and acidic residues. Residues 328–352 (FDNERGSTSKEGEPNLDKKNTPVQS) form a disordered region. Phosphoserine occurs at positions 352 and 578. The tract at residues 579-648 (PESLKNMEKA…APKEEEKVNE (70 aa)) is disordered. Positions 583 to 604 (KNMEKASKTTEAKPESKQEPVK) are enriched in basic and acidic residues. A Phosphoserine modification is found at serine 612. Low complexity predominate over residues 614 to 628 (ASTCSDASSIASSAS). Residue threonine 637 is modified to Phosphothreonine. A phosphoserine mark is found at serine 808, serine 928, and serine 1018. Disordered stretches follow at residues 999–1031 (AGLG…PDPP) and 1052–1075 (TAAT…EPSV). The segment covering 1017-1031 (VSPPIAPPSWVPDPP) has biased composition (pro residues). The span at 1052–1073 (TAATGTGQGPSTSTIPGPSTEP) shows a compositional bias: polar residues. Phosphothreonine is present on residues threonine 1115 and threonine 1135. The UBR-type zinc finger occupies 1177–1245 (DTCSFTWTGA…EKCKCKTLIA (69 aa)). Residues cysteine 1179, cysteine 1196, cysteine 1199, cysteine 1208, cysteine 1211, cysteine 1215, histidine 1216, and histidine 1219 each coordinate Zn(2+). At serine 1227 the chain carries Phosphoserine. Residues cysteine 1232, cysteine 1234, and cysteine 1240 each coordinate Zn(2+). A disordered region spans residues 1299–1318 (REDRNRKTASPEDSDMPDHD). Phosphoserine occurs at positions 1308, 1355, 1375, and 1481. The interval 1515–1740 (SVEPLPPRPS…PSSTSTPAAS (226 aa)) is disordered. Residues 1524 to 1537 (SSDQSSSSSQSQSS) show a composition bias toward low complexity. Over residues 1538–1553 (YIIRNPQQRRISQSQP) the composition is skewed to polar residues. Residue serine 1549 is modified to Phosphoserine. Composition is skewed to acidic residues over residues 1559-1574 (EEQD…EVEV) and 1605-1614 (HDEDGSDMEL). Positions 1629–1638 (NHSNQDNASG) are enriched in polar residues. Composition is skewed to low complexity over residues 1641 to 1657 (SVVT…ASSV), 1668 to 1681 (SNDS…SSQS), and 1726 to 1740 (AAST…PAAS). Residue threonine 1736 is modified to Phosphothreonine. Serine 1741 is modified (phosphoserine). A Phosphotyrosine modification is found at tyrosine 1746. A Phosphoserine modification is found at serine 1780. Positions 1859–1890 (LASAGDPGHPNHPLHASQNSARRERMTAREEA) are disordered. Residues 1879–1890 (ARRERMTAREEA) show a composition bias toward basic and acidic residues. Threonine 1969 carries the phosphothreonine modification. Residues 1984–2021 (GIDNEDSEHENDDDTNQSATLNDKDDDSLPAETGQNHP) form a disordered region. A compositionally biased stretch (acidic residues) spans 1985–1998 (IDNEDSEHENDDDT). Residues serine 1990, serine 2026, and serine 2028 each carry the phosphoserine modification. Threonine 2030 is modified (phosphothreonine). The residue at position 2076 (serine 2076) is a Phosphoserine. The tract at residues 2117-2142 (RQKKEGEEQPVLPEETESSKPGPSAH) is disordered. Threonine 2213 is subject to Phosphothreonine. A phosphoserine mark is found at serine 2241 and serine 2289. The tract at residues 2323-2392 (HTSLMQRLRN…PSDDPEPLPA (70 aa)) is disordered. 2 stretches are compositionally biased toward basic and acidic residues: residues 2332 to 2348 (NRGE…EMRR) and 2356 to 2368 (SRRD…RRQL). Positions 2377–2454 (PASEGNPSDD…AMELIIAHGR (78 aa)) constitute a PABC domain. The 338-residue stretch at 2462–2799 (LDLGLVDSSE…AIKTKNFGFV (338 aa)) folds into the HECT domain. 3 positions are modified to phosphoserine: serine 2469, serine 2484, and serine 2486. The interval 2473-2493 (VQQENRKRHGSSRSVVDMDLD) is disordered. Cysteine 2768 (glycyl thioester intermediate) is an active-site residue.

It belongs to the UBR5 family. In terms of assembly, homotetramer; composed of a dimer of dimers. Associates with CDK9 and TFIIS/TCEA1 and forms a transcription regulatory complex made of CDK9, RNAP II, UBR5 and TFIIS/TCEA1 that can stimulate target gene transcription (e.g. gamma fibrinogen/FGG) by recruiting their promoters. Associates with the E3 ligase complex containing DYRK2, EDD/UBR5, DDB1 and DCAF1 proteins (EDVP complex). Binds TOPBP1. Interacts with PIH1D1. Interacts with CIB1. As to quaternary structure, (Microbial infection) Interacts with human T-cell leukemia virus 1/HTLV-1 protein HBZ; this interaction modulates HBZ stability. In terms of tissue distribution, widely expressed. Most abundant in testis and expressed at high levels in brain, pituitary and kidney.

It is found in the nucleus. It localises to the cytoplasm. The catalysed reaction is S-ubiquitinyl-[E2 ubiquitin-conjugating enzyme]-L-cysteine + [acceptor protein]-L-lysine = [E2 ubiquitin-conjugating enzyme]-L-cysteine + N(6)-ubiquitinyl-[acceptor protein]-L-lysine.. Its pathway is protein modification; protein ubiquitination. E3 ubiquitin-protein ligase involved in different protein quality control pathways in the cytoplasm and nucleus. Mainly acts as a ubiquitin chain elongator that extends pre-ubiquitinated substrates. Component of the N-end rule pathway: ubiquitinates proteins bearing specific N-terminal residues that are destabilizing according to the N-end rule, leading to their degradation. Recognizes type-1 N-degrons, containing positively charged amino acids (Arg, Lys and His). Together with UBR4, part of a cytoplasm protein quality control pathway that prevents protein aggregation by catalyzing assembly of heterotypic 'Lys-11'-/'Lys-48'-linked branched ubiquitin chains on aggregated proteins, leading to substrate recognition by the segregase p97/VCP and degradation by the proteasome: UBR5 is probably branching multiple 'Lys-48'-linked chains of substrates initially modified with mixed conjugates by UBR4. Together with ITCH, catalyzes 'Lys-48'-/'Lys-63'-branched ubiquitination of TXNIP, leading to its degradation: UBR5 mediates branching of 'Lys-48'-linked chains of substrates initially modified with 'Lys-63'-linked conjugates by ITCH. Catalytic component of a nuclear protein quality control pathway that mediates ubiquitination and degradation of unpaired transcription factors (i.e. transcription factors that are not assembled into functional multiprotein complexes): specifically recognizes and binds degrons that are not accessible when transcription regulators are associated with their coactivators. Ubiquitinates various unpaired transcription regulator (MYC, SUPT4H1, SUPT5H, CDC20 and MCRS1), as well as ligand-bound nuclear receptors (ESR1, NR1H3, NR3C1, PGR, RARA, RXRA AND VDR) that are not associated with their nuclear receptor coactivators (NCOAs). Involved in maturation and/or transcriptional regulation of mRNA by mediating polyubiquitination and activation of CDK9. Also acts as a regulator of DNA damage response by acting as a suppressor of RNF168, an E3 ubiquitin-protein ligase that promotes accumulation of 'Lys-63'-linked histone H2A and H2AX at DNA damage sites, thereby acting as a guard against excessive spreading of ubiquitinated chromatin at damaged chromosomes. Regulates DNA topoisomerase II binding protein (TopBP1) in the DNA damage response. Ubiquitinates acetylated PCK1. Acts as a positive regulator of the canonical Wnt signaling pathway by mediating (1) ubiquitination and stabilization of CTNNB1, and (2) 'Lys-48'-linked ubiquitination and degradation of TLE3. Promotes disassembly of the mitotic checkpoint complex (MCC) from the APC/C complex by catalyzing ubiquitination of BUB1B, BUB3 and CDC20. Plays an essential role in extraembryonic development. Required for the maintenance of skeletal tissue homeostasis by acting as an inhibitor of hedgehog (HH) signaling. The polypeptide is E3 ubiquitin-protein ligase UBR5 (UBR5) (Homo sapiens (Human)).